The chain runs to 138 residues: Large ribosomal subunit protein uL14 (138 aa).

Belongs to the universal ribosomal protein uL14 family. Part of the 50S ribosomal subunit. Forms a cluster with proteins L3 and L24e, part of which may contact the 16S rRNA in 2 intersubunit bridges.

In terms of biological role, binds to 23S rRNA. Forms part of two intersubunit bridges in the 70S ribosome. In Sulfurisphaera tokodaii (strain DSM 16993 / JCM 10545 / NBRC 100140 / 7) (Sulfolobus tokodaii), this protein is Large ribosomal subunit protein uL14.